A 199-amino-acid polypeptide reads, in one-letter code: Superoxide dismutase [Mn/Fe] (199 aa).

Fe(3+) is bound by residues histidine 27, histidine 81, aspartate 161, and histidine 165. Mn(2+) contacts are provided by histidine 27, histidine 81, aspartate 161, and histidine 165.

It belongs to the iron/manganese superoxide dismutase family. As to quaternary structure, homodimer. The cofactor is Mn(2+). It depends on Fe(3+) as a cofactor.

It catalyses the reaction 2 superoxide + 2 H(+) = H2O2 + O2. Its function is as follows. Destroys superoxide anion radicals which are normally produced within the cells and which are toxic to biological systems. Catalyzes the dismutation of superoxide anion radicals into O2 and H2O2 by successive reduction and oxidation of the transition metal ion at the active site. Also contributes to the inhibition of lipid oxidation. Manganese-preferring enzyme, less active with iron than with manganese. The polypeptide is Superoxide dismutase [Mn/Fe] (sodA) (Staphylococcus xylosus).